The primary structure comprises 178 residues: Protein GrpE (178 aa).

This sequence belongs to the GrpE family. Homodimer.

Its subcellular location is the cytoplasm. Functionally, participates actively in the response to hyperosmotic and heat shock by preventing the aggregation of stress-denatured proteins, in association with DnaK and GrpE. It is the nucleotide exchange factor for DnaK and may function as a thermosensor. Unfolded proteins bind initially to DnaJ; upon interaction with the DnaJ-bound protein, DnaK hydrolyzes its bound ATP, resulting in the formation of a stable complex. GrpE releases ADP from DnaK; ATP binding to DnaK triggers the release of the substrate protein, thus completing the reaction cycle. Several rounds of ATP-dependent interactions between DnaJ, DnaK and GrpE are required for fully efficient folding. The sequence is that of Protein GrpE from Rickettsia africae (strain ESF-5).